The chain runs to 324 residues: tRNA U34 carboxymethyltransferase (324 aa).

Residues Lys92, Trp106, Lys111, Gly131, 153-155, 181-182, Met197, Tyr201, and Arg316 each bind carboxy-S-adenosyl-L-methionine; these read DPT and IE.

Belongs to the class I-like SAM-binding methyltransferase superfamily. CmoB family. In terms of assembly, homotetramer.

The catalysed reaction is carboxy-S-adenosyl-L-methionine + 5-hydroxyuridine(34) in tRNA = 5-carboxymethoxyuridine(34) in tRNA + S-adenosyl-L-homocysteine + H(+). In terms of biological role, catalyzes carboxymethyl transfer from carboxy-S-adenosyl-L-methionine (Cx-SAM) to 5-hydroxyuridine (ho5U) to form 5-carboxymethoxyuridine (cmo5U) at position 34 in tRNAs. The sequence is that of tRNA U34 carboxymethyltransferase from Methylococcus capsulatus (strain ATCC 33009 / NCIMB 11132 / Bath).